The following is a 464-amino-acid chain: tRNA modification GTPase MnmE (464 aa).

3 residues coordinate (6S)-5-formyl-5,6,7,8-tetrahydrofolate: Arg-29, Glu-91, and Arg-131. The region spanning 226-387 is the TrmE-type G domain; sequence GLKVALAGKP…LINYLLKKCG (162 aa). Asn-236 is a binding site for K(+). Residues 236–241, 255–261, and 280–283 contribute to the GTP site; these read NVGKSS, TDLPGTT, and DTAG. Ser-240 is a Mg(2+) binding site. 3 residues coordinate K(+): Thr-255, Leu-257, and Thr-260. Position 261 (Thr-261) interacts with Mg(2+). A (6S)-5-formyl-5,6,7,8-tetrahydrofolate-binding site is contributed by Lys-464.

The protein belongs to the TRAFAC class TrmE-Era-EngA-EngB-Septin-like GTPase superfamily. TrmE GTPase family. In terms of assembly, homodimer. Heterotetramer of two MnmE and two MnmG subunits. It depends on K(+) as a cofactor.

Its subcellular location is the cytoplasm. Functionally, exhibits a very high intrinsic GTPase hydrolysis rate. Involved in the addition of a carboxymethylaminomethyl (cmnm) group at the wobble position (U34) of certain tRNAs, forming tRNA-cmnm(5)s(2)U34. The chain is tRNA modification GTPase MnmE from Prochlorococcus marinus (strain NATL1A).